The chain runs to 282 residues: MTTRAQAPVGVFDSGLGGLSVLRAIRAELPAESLLYLADSRHAPYGEKSPEYIADRTLRVCEWLVDQGCKALVIACNTATAQAVHVLREKLAVPVIGVEPGLKPAVATSKSRVVGVLATESTLRSEKFARLLAGASGDCKVLSQPGYGLVPLIERGDTHSPAVLELLRAYLQPMLDANADTLVLGCTHYPFLEDAIHEIAGDRLTLIDTGHAVARHLGRTLAAAGLQASGQAATPCFMSTGDVLPLQAMVAALLGEAPMAQRVDIGDAPLSPVAVSLASQPE.

Substrate is bound by residues 13–14 and 45–46; these read DS and YG. Cys-76 functions as the Proton donor/acceptor in the catalytic mechanism. A substrate-binding site is contributed by 77–78; sequence NT. Cys-186 (proton donor/acceptor) is an active-site residue. Residue 187 to 188 participates in substrate binding; sequence TH.

It belongs to the aspartate/glutamate racemases family.

It carries out the reaction L-glutamate = D-glutamate. It functions in the pathway cell wall biogenesis; peptidoglycan biosynthesis. Its function is as follows. Provides the (R)-glutamate required for cell wall biosynthesis. This is Glutamate racemase from Ralstonia pickettii (strain 12J).